Here is a 282-residue protein sequence, read N- to C-terminus: Putative SLC9B1-like protein SLC9B1P1 (282 aa).

Transmembrane regions (helical) follow at residues 27–47 (LLAI…GGMI), 51–71 (IASL…GFFV), 87–107 (GFLV…IGLH), 135–155 (IITN…GAEV), 174–194 (LALC…GFSF), 198–218 (IFIA…GPLA), and 239–259 (VAFL…GILG).

The protein belongs to the monovalent cation:proton antiporter 1 (CPA1) transporter (TC 2.A.36) family.

It localises to the membrane. The protein is Putative SLC9B1-like protein SLC9B1P1 (SLC9B1P1) of Homo sapiens (Human).